A 587-amino-acid polypeptide reads, in one-letter code: Dynein axonemal intermediate chain 2 (587 aa).

WD repeat units lie at residues 214 to 254 (RPAS…NPVE), 261 to 302 (SHRD…EPTE), 362 to 401 (GHHG…SSIM), and 405 to 445 (YHTS…NNPS). Disordered regions lie at residues 519–542 (LKER…DMKE) and 562–587 (KEQQ…IVHE).

The protein belongs to the dynein intermediate chain family. Consists of at least two heavy chains and a number of intermediate and light chains. Interacts with DNAAF2. Interacts with DNAAF6/PIH1D3. Interacts with HEATR2; probably involved in outer arm dynein assembly. Interacts with C16ORF71/DAAP1.

The protein localises to the cytoplasm. It is found in the cytoskeleton. Its subcellular location is the cilium axoneme. It localises to the dynein axonemal particle. In terms of biological role, part of the dynein complex of multiciliated cell cilia. This Xenopus laevis (African clawed frog) protein is Dynein axonemal intermediate chain 2 (dnai2).